The following is a 214-amino-acid chain: Ribonuclease HII (214 aa).

An RNase H type-2 domain is found at 18-208 (SRVVGVDEVG…SLLPSEAHLC (191 aa)). 3 residues coordinate a divalent metal cation: aspartate 24, glutamate 25, and aspartate 116.

Belongs to the RNase HII family. Mn(2+) is required as a cofactor. The cofactor is Mg(2+).

It localises to the cytoplasm. The enzyme catalyses Endonucleolytic cleavage to 5'-phosphomonoester.. Endonuclease that specifically degrades the RNA of RNA-DNA hybrids. This is Ribonuclease HII from Thermosynechococcus vestitus (strain NIES-2133 / IAM M-273 / BP-1).